The chain runs to 880 residues: Alanine--tRNA ligase (880 aa).

His567, His571, Cys669, and His673 together coordinate Zn(2+).

This sequence belongs to the class-II aminoacyl-tRNA synthetase family. Zn(2+) is required as a cofactor.

It localises to the cytoplasm. The catalysed reaction is tRNA(Ala) + L-alanine + ATP = L-alanyl-tRNA(Ala) + AMP + diphosphate. Its function is as follows. Catalyzes the attachment of alanine to tRNA(Ala) in a two-step reaction: alanine is first activated by ATP to form Ala-AMP and then transferred to the acceptor end of tRNA(Ala). Also edits incorrectly charged Ser-tRNA(Ala) and Gly-tRNA(Ala) via its editing domain. In Bacillus mycoides (strain KBAB4) (Bacillus weihenstephanensis), this protein is Alanine--tRNA ligase.